We begin with the raw amino-acid sequence, 307 residues long: Dof zinc finger protein DOF5.4 (307 aa).

The Dof-type zinc finger occupies 51–105 (LKCPRCNSLNTKFCYYNNYNLSQPRHFCKNCRRYWTKGGVLRNVPVGGGCRKAKR). 4 residues coordinate Zn(2+): C53, C56, C78, and C81. Residues 96–147 (VGGGCRKAKRSKTKQVPSSSSADKPTTTQDDHHVEEKSSTGSHSSSESSSLT) are disordered. Residues 109-123 (KQVPSSSSADKPTTT) show a composition bias toward polar residues. Positions 124–133 (QDDHHVEEKS) are enriched in basic and acidic residues. Over residues 134–147 (STGSHSSSESSSLT) the composition is skewed to low complexity.

The protein localises to the nucleus. Functionally, transcription factor that binds specifically to a 5'-AA[AG]G-3' consensus core sequence. Enhances the DNA binding of OBF transcription factors to OCS elements. The protein is Dof zinc finger protein DOF5.4 (DOF5.4) of Arabidopsis thaliana (Mouse-ear cress).